The following is a 330-amino-acid chain: Peptide transport system ATP-binding protein SapD (330 aa).

An ABC transporter domain is found at 6-259; sequence IRNLTIEFKT…PHHPYTQALI (254 aa). 40 to 47 serves as a coordination point for ATP; that stretch reads GESGSGKS.

This sequence belongs to the ABC transporter superfamily.

It is found in the cell inner membrane. Its function is as follows. Involved in a peptide intake transport system that plays a role in the resistance to antimicrobial peptides. The chain is Peptide transport system ATP-binding protein SapD (sapD) from Escherichia coli O157:H7.